We begin with the raw amino-acid sequence, 59 residues long: uncharacterized protein (59 aa).

A helical membrane pass occupies residues L7 to V27.

It is found in the membrane. This is an uncharacterized protein from Pyrobaculum aerophilum (strain ATCC 51768 / DSM 7523 / JCM 9630 / CIP 104966 / NBRC 100827 / IM2).